Consider the following 501-residue polypeptide: Eukaryotic translation initiation factor 3 subunit E (501 aa).

One can recognise a PCI domain in the interval 245–423; it reads CDLFFYTPYL…ESIESTSTNV (179 aa). A phosphoserine mark is found at Ser477 and Ser479.

This sequence belongs to the eIF-3 subunit E family. In terms of assembly, component of the eukaryotic translation initiation factor 3 (eIF-3) complex. The eIF-3 complex appears to include tif32/eif3a, SPAC25G10.08/eif3b, tif33/eif3c, SPBC4C3.07/eif3f, tif35/eif3g and sum1/eif3i. This set of common subunits may also associate exclusively with either moe1/eif3d and int6/eif3e, or with SPAC821.05/eif3h and SPAC1751.03/eif3m. The eIF-3 complex may also include SPAC3A12.13c/eif3j. Also interacts with the proteasome via rpn501/rpn502.

Its subcellular location is the cytoplasm. Component of the eukaryotic translation initiation factor 3 (eIF-3) complex, which is involved in protein synthesis of a specialized repertoire of mRNAs and, together with other initiation factors, stimulates binding of mRNA and methionyl-tRNAi to the 40S ribosome. The eIF-3 complex specifically targets and initiates translation of a subset of mRNAs involved in cell proliferation (Potential). Required for maintaining the basal level of atf1 and for transcriptional activation of core environmental stress response genes (CESR genes) in response to histidine starvation. May positively regulate proteasome activity. Required for nuclear localization of the proteasome subunit rpn501/rpn502. This Schizosaccharomyces pombe (strain 972 / ATCC 24843) (Fission yeast) protein is Eukaryotic translation initiation factor 3 subunit E (int6).